A 351-amino-acid chain; its full sequence is Photosystem II D2 protein (351 aa).

A helical transmembrane segment spans residues 39 to 59 (TAYLAAGGWMTGTTFVTSWYT). His116 is a chlorophyll a binding site. The chain crosses the membrane as a helical span at residues 123–139 (GFCLRQFEIARLVGIRP). Residues Gln128 and Asn141 each coordinate pheophytin a. A helical membrane pass occupies residues 151 to 164 (VFVSVFLLYPLGQA). His196 provides a ligand contact to chlorophyll a. Residues 206 to 226 (GALLCAIHGATVENTLFEDGD) form a helical membrane-spanning segment. A plastoquinone contacts are provided by His213 and Phe260. Position 213 (His213) interacts with Fe cation. His267 provides a ligand contact to Fe cation. The helical transmembrane segment at 277–293 (GLWTSAIGIVGLALNLR) threads the bilayer.

Belongs to the reaction center PufL/M/PsbA/D family. In terms of assembly, PSII is composed of 1 copy each of membrane proteins PsbA, PsbB, PsbC, PsbD, PsbE, PsbF, PsbH, PsbI, PsbJ, PsbK, PsbL, PsbM, PsbT, PsbX, PsbY, PsbZ, Psb30/Ycf12, at least 3 peripheral proteins of the oxygen-evolving complex and a large number of cofactors. It forms dimeric complexes. The cofactor is The D1/D2 heterodimer binds P680, chlorophylls that are the primary electron donor of PSII, and subsequent electron acceptors. It shares a non-heme iron and each subunit binds pheophytin, quinone, additional chlorophylls, carotenoids and lipids. There is also a Cl(-1) ion associated with D1 and D2, which is required for oxygen evolution. The PSII complex binds additional chlorophylls, carotenoids and specific lipids..

It localises to the plastid. The protein resides in the chloroplast thylakoid membrane. The enzyme catalyses 2 a plastoquinone + 4 hnu + 2 H2O = 2 a plastoquinol + O2. In terms of biological role, photosystem II (PSII) is a light-driven water:plastoquinone oxidoreductase that uses light energy to abstract electrons from H(2)O, generating O(2) and a proton gradient subsequently used for ATP formation. It consists of a core antenna complex that captures photons, and an electron transfer chain that converts photonic excitation into a charge separation. The D1/D2 (PsbA/PsbD) reaction center heterodimer binds P680, the primary electron donor of PSII as well as several subsequent electron acceptors. D2 is needed for assembly of a stable PSII complex. This chain is Photosystem II D2 protein, found in Trieres chinensis (Marine centric diatom).